A 252-amino-acid chain; its full sequence is Triosephosphate isomerase (252 aa).

A substrate-binding site is contributed by 10–12 (NWK). His96 acts as the Electrophile in catalysis. Glu168 acts as the Proton acceptor in catalysis. Substrate-binding positions include Gly174, Ser214, and 235–236 (GG).

Belongs to the triosephosphate isomerase family. As to quaternary structure, homodimer.

It is found in the cytoplasm. The enzyme catalyses D-glyceraldehyde 3-phosphate = dihydroxyacetone phosphate. Its pathway is carbohydrate biosynthesis; gluconeogenesis. The protein operates within carbohydrate degradation; glycolysis; D-glyceraldehyde 3-phosphate from glycerone phosphate: step 1/1. Its function is as follows. Involved in the gluconeogenesis. Catalyzes stereospecifically the conversion of dihydroxyacetone phosphate (DHAP) to D-glyceraldehyde-3-phosphate (G3P). The sequence is that of Triosephosphate isomerase from Streptococcus pyogenes serotype M5 (strain Manfredo).